The chain runs to 355 residues: MNNFAKIFQSNWIDLNKLGKLEIFLKTISGIYKAPNRTHLLAHAADISSFYAVKNIYEYMKNDDEGKVILKNKPLLIRQDIQFNELKKLPKNTLGYKYMEFLEAYKLHAHDREAAHFFDDINYSYILTRYRQIHDIGHVVYNLNISIESEAALKMIELIHTKLPITLLAILVAPFMTPLYRFQYIFKDKIPPNFLNPNFDYTYKDDYNYIDELSLKQYVYNLTEYFHIDKIDNNIFFQKLYKYYFDNLNNSNNIRGTIIYGYNNEDNNDIIFDDINNEYIFLKNPEKNYFLFKYKPRQTLLKQLYPWAYMAGMAATKPLHSIHIENWLDKDIDLFRKTYNIIPLPDHLNLMSGIN.

4 residues coordinate Zn(2+): histidine 134, aspartate 135, histidine 138, and glutamate 150.

It belongs to the COQ4 family. Component of a multi-subunit COQ enzyme complex. Zn(2+) is required as a cofactor.

It is found in the mitochondrion inner membrane. The enzyme catalyses a 4-hydroxy-3-methoxy-5-(all-trans-polyprenyl)benzoate + H(+) = a 2-methoxy-6-(all-trans-polyprenyl)phenol + CO2. It participates in cofactor biosynthesis; ubiquinone biosynthesis. In terms of biological role, lyase that catalyzes the C1-decarboxylation of 4-hydroxy-3-methoxy-5-(all-trans-polyprenyl)benzoic acid into 2-methoxy-6-(all-trans-polyprenyl)phenol during ubiquinone biosynthesis. The sequence is that of Ubiquinone biosynthesis protein COQ4 homolog, mitochondrial from Plasmodium chabaudi chabaudi.